The primary structure comprises 334 residues: Phosphatidylglycerol--prolipoprotein diacylglyceryl transferase (334 aa).

A run of 4 helical transmembrane segments spans residues 22-42, 54-74, 105-125, and 131-151; these read FLPF…VVAA, AEPG…IIGA, IWEG…GVGI, and GLRF…AQAI. Arg-153 is a binding site for a 1,2-diacyl-sn-glycero-3-phospho-(1'-sn-glycerol). Helical transmembrane passes span 191–211 and 251–271; these read LFQP…FVIL and FLGI…GAII. The interval 296-334 is disordered; the sequence is PQAEVESGETDPEEILHADDDEERTGTHKPQATSLSGSN. Residues 301-318 are compositionally biased toward acidic residues; sequence ESGETDPEEILHADDDEE. Positions 323–334 are enriched in polar residues; the sequence is HKPQATSLSGSN.

This sequence belongs to the Lgt family.

It localises to the cell membrane. It carries out the reaction L-cysteinyl-[prolipoprotein] + a 1,2-diacyl-sn-glycero-3-phospho-(1'-sn-glycerol) = an S-1,2-diacyl-sn-glyceryl-L-cysteinyl-[prolipoprotein] + sn-glycerol 1-phosphate + H(+). It participates in protein modification; lipoprotein biosynthesis (diacylglyceryl transfer). In terms of biological role, catalyzes the transfer of the diacylglyceryl group from phosphatidylglycerol to the sulfhydryl group of the N-terminal cysteine of a prolipoprotein, the first step in the formation of mature lipoproteins. The chain is Phosphatidylglycerol--prolipoprotein diacylglyceryl transferase from Leifsonia xyli subsp. xyli (strain CTCB07).